The primary structure comprises 191 residues: Photosystem I assembly protein Ycf4 (191 aa).

2 consecutive transmembrane segments (helical) span residues 34-54 and 68-88; these read VASM…SSYF and IFVP…LLAI.

The protein belongs to the Ycf4 family.

It localises to the cellular thylakoid membrane. Its function is as follows. Seems to be required for the assembly of the photosystem I complex. The protein is Photosystem I assembly protein Ycf4 of Prochlorococcus marinus (strain NATL2A).